The sequence spans 306 residues: D-alanine--D-alanine ligase (306 aa).

An ATP-grasp domain is found at 102-300 (KIVVASVGVS…YGDIVQWMVE (199 aa)). 128 to 183 (PMEPPYVIKPVCEGSSLGVIIVKENESVPSLNVVGSEWVYADTVIVEKYIPGRELT) is an ATP binding site. Mg(2+) contacts are provided by D253, E267, and N269.

This sequence belongs to the D-alanine--D-alanine ligase family. Mg(2+) serves as cofactor. The cofactor is Mn(2+).

The protein localises to the cytoplasm. It catalyses the reaction 2 D-alanine + ATP = D-alanyl-D-alanine + ADP + phosphate + H(+). The protein operates within cell wall biogenesis; peptidoglycan biosynthesis. In terms of biological role, cell wall formation. The sequence is that of D-alanine--D-alanine ligase from Bartonella henselae (strain ATCC 49882 / DSM 28221 / CCUG 30454 / Houston 1) (Rochalimaea henselae).